The chain runs to 302 residues: Rhomboid-related protein 2 (302 aa).

The segment at 1 to 38 is disordered; the sequence is MAVAHEMEMESVNLNMEREGKEEPEEEKMKGNGEGKDF. Over residues 16-38 the composition is skewed to basic and acidic residues; sequence MEREGKEEPEEEKMKGNGEGKDF. Helical transmembrane passes span 71-91, 127-147, 158-178, 182-202, 211-231, 244-264, and 277-297; these read PLFIILISLAELAVFIYYAVW, LVHAGVQHIVGNLLMQIVLGI, VGLVYLAGVLAGSLASSIFDP, LVGASGGVYALMGGYFMNVIV, FGIVRLLVIILIVASDMGFAL, VSFAAHIAGGFAGMSIGYTVF, and FWIAIAAYVACLLFAVFFNIF. The Nucleophile role is filled by serine 186. Residue histidine 249 is part of the active site.

Belongs to the peptidase S54 family. Post-translationally, proteolytic processing of the proenzyme produces an N- and a C-terminal fragment. The processing is required for activation of the protease.

It localises to the cell membrane. The enzyme catalyses Cleaves type-1 transmembrane domains using a catalytic dyad composed of serine and histidine that are contributed by different transmembrane domains.. Functionally, involved in regulated intramembrane proteolysis and the subsequent release of functional polypeptides from their membrane anchors. Known substrate: EFNB3. This chain is Rhomboid-related protein 2 (Rhbdl2), found in Mus musculus (Mouse).